The following is a 206-amino-acid chain: Ribosomal RNA small subunit methyltransferase G (206 aa).

S-adenosyl-L-methionine contacts are provided by residues glycine 71, phenylalanine 76, 122–123 (AE), and arginine 135.

Belongs to the methyltransferase superfamily. RNA methyltransferase RsmG family.

It localises to the cytoplasm. Its function is as follows. Specifically methylates the N7 position of a guanine in 16S rRNA. This is Ribosomal RNA small subunit methyltransferase G from Bacteroides thetaiotaomicron (strain ATCC 29148 / DSM 2079 / JCM 5827 / CCUG 10774 / NCTC 10582 / VPI-5482 / E50).